The sequence spans 183 residues: Peptide deformylase (183 aa).

Residues Cys90 and His132 each coordinate Fe cation. Residue Glu133 is part of the active site. His136 serves as a coordination point for Fe cation.

This sequence belongs to the polypeptide deformylase family. Fe(2+) is required as a cofactor.

It catalyses the reaction N-terminal N-formyl-L-methionyl-[peptide] + H2O = N-terminal L-methionyl-[peptide] + formate. Its function is as follows. Removes the formyl group from the N-terminal Met of newly synthesized proteins. Requires at least a dipeptide for an efficient rate of reaction. N-terminal L-methionine is a prerequisite for activity but the enzyme has broad specificity at other positions. This chain is Peptide deformylase, found in Parafrankia sp. (strain EAN1pec).